The primary structure comprises 110 residues: Antimicrobial peptide microplusin (110 aa).

Residues 1 to 20 (MKAIFVSALLVVALVASTSA) form the signal peptide. Disulfide bonds link cysteine 26-cysteine 72, cysteine 39-cysteine 100, and cysteine 61-cysteine 66.

In terms of tissue distribution, expressed in the hemocytes, fat body and ovaries.

It localises to the secreted. In terms of biological role, has bacteriostatic activity against the Gram-positive bacterium M.luteus, but not against Gram-negative bacterium E.coli SBS363. Has fungistatic activity against C.neoformans, but not C.albicans. Binds and sequesters copper and iron ions. Copper-chelating is crucial for antimicrobial activity against M.luteus. The sequence is that of Antimicrobial peptide microplusin from Rhipicephalus microplus (Cattle tick).